The sequence spans 301 residues: MKVGVIMGGISSEREISLKSGKSIVDSINKNKYEVVSIVIDEKEDIINKVKGIDFALLALHGQFGEDGTVQSVLQTLGIPYSGCGPLSSSMCMDKDISKCILKAANIRTAPWINLRKNDAINYEEIEKMGYPVVVKPTHGGSSVATFIIKEEKDIKDAVIEGFKWDSEVIIEKFIKGDEITCPVFGDKMLPVVAIKPKAEFFDFTAKYADGGSDEFVTELPKKLHEEVEKMALATYKALKCEVYSRVDMIVTEDKVPYILEVNTLPGMTPNSLIPKSAAGVNISFPELIDMIIDESMKVIR.

The ATP-grasp domain occupies 99 to 294 (KCILKAANIR…FPELIDMIID (196 aa)). Position 126–181 (126–181 (IEKMGYPVVVKPTHGGSSVATFIIKEEKDIKDAVIEGFKWDSEVIIEKFIKGDEIT)) interacts with ATP. Positions 248, 261, and 263 each coordinate Mg(2+).

It belongs to the D-alanine--D-alanine ligase family. It depends on Mg(2+) as a cofactor. Mn(2+) serves as cofactor.

It is found in the cytoplasm. It carries out the reaction 2 D-alanine + ATP = D-alanyl-D-alanine + ADP + phosphate + H(+). It functions in the pathway cell wall biogenesis; peptidoglycan biosynthesis. Its function is as follows. Cell wall formation. The polypeptide is D-alanine--D-alanine ligase (Clostridium botulinum (strain Alaska E43 / Type E3)).